The chain runs to 240 residues: Ribonuclease 3 (240 aa).

The RNase III domain maps to 9-141; sequence VEEFQKETGI…LLAAIYLDQG (133 aa). Glutamate 54 contacts Mg(2+). The active site involves aspartate 58. Mg(2+) contacts are provided by aspartate 127 and glutamate 130. Glutamate 130 is an active-site residue. The 70-residue stretch at 168-237 folds into the DRBM domain; that stretch reads DYKTALQEIV…ARIAYEKLLK (70 aa).

It belongs to the ribonuclease III family. As to quaternary structure, homodimer. The cofactor is Mg(2+).

The protein localises to the cytoplasm. The enzyme catalyses Endonucleolytic cleavage to 5'-phosphomonoester.. In terms of biological role, digests double-stranded RNA. Involved in the processing of primary rRNA transcript to yield the immediate precursors to the large and small rRNAs (23S and 16S). Also processes some mRNAs, and tRNAs when they are encoded in the rRNA operon. Probably processes pre-crRNA and tracrRNA of type II CRISPR loci if present in the organism. The protein is Ribonuclease 3 (rnc) of Thermotoga maritima (strain ATCC 43589 / DSM 3109 / JCM 10099 / NBRC 100826 / MSB8).